Here is a 54-residue protein sequence, read N- to C-terminus: Large ribosomal subunit protein bL32 (54 aa).

The segment at 1–54 is disordered; sequence MAVQQNRKTRSRRGMRRSHDALTAAQLSVDSTSGETHRRHHVTADGYYRGKKVI. Basic residues predominate over residues 7–16; that stretch reads RKTRSRRGMR. Over residues 25 to 34 the composition is skewed to polar residues; the sequence is AQLSVDSTSG.

This sequence belongs to the bacterial ribosomal protein bL32 family.

This is Large ribosomal subunit protein bL32 from Tolumonas auensis (strain DSM 9187 / NBRC 110442 / TA 4).